The primary structure comprises 508 residues: Photosystem II CP47 reaction center protein (508 aa).

A run of 6 helical transmembrane segments spans residues Ala21–Ser36, Ile101–Trp115, Gly140–Phe156, Ile203–Ser218, Val237–Val252, and Ser457–Arg472.

The protein belongs to the PsbB/PsbC family. PsbB subfamily. PSII is composed of 1 copy each of membrane proteins PsbA, PsbB, PsbC, PsbD, PsbE, PsbF, PsbH, PsbI, PsbJ, PsbK, PsbL, PsbM, PsbT, PsbX, PsbY, PsbZ, Psb30/Ycf12, at least 3 peripheral proteins of the oxygen-evolving complex and a large number of cofactors. It forms dimeric complexes. Requires Binds multiple chlorophylls. PSII binds additional chlorophylls, carotenoids and specific lipids. as cofactor.

It is found in the plastid. The protein resides in the chloroplast thylakoid membrane. One of the components of the core complex of photosystem II (PSII). It binds chlorophyll and helps catalyze the primary light-induced photochemical processes of PSII. PSII is a light-driven water:plastoquinone oxidoreductase, using light energy to abstract electrons from H(2)O, generating O(2) and a proton gradient subsequently used for ATP formation. In Oenothera argillicola (Appalachian evening primrose), this protein is Photosystem II CP47 reaction center protein.